A 1370-amino-acid polypeptide reads, in one-letter code: MPYSYTEKKRIRKSFAKREDVQNVPFLLATQLQSYLTFLQADTATSDRVNEGLQAAFSSIFPIVSHNGMARLEFVSYALGEPVFDVKECQQRGLTYASPLRAKVRLVLLDREVSKPTIKEVKEQEVYMGEIPLMTGTGSFVINGTERVIVSQLHRSPGVFFEHDRGKTHSSGKLLFSARVIPYRGSWLDFEFDPKDVLFFRVDRRRKMPVTILLKAIGMTPESILAHFFDFDNFELKSEGGMMEFVAERWKGEMARFDIADRDGKVIVEKDKRINAKHLRDLAAGGIQRVSVPEDFLYGRVLAKNIVDPDTGEVVAHANDEITESVLNAMRAANVRDIQTLYTNDLDRGPYISQTLRADETADQMAARVAIYRMMRPGEPPTEEAVEALFQRLFYSEETYDLSRVGRMKVNSRLGRGDDSTGPMTLTNEDILETIKVLVELRNGRGQIDDIDHLGNRRVRCVGELAENQFRAGLVRVERAVKERLGQAETENLMPHDLINSKPISAAIKEFFGSSQLSQFMDQTNPLSEITHKRRVSALGPGGLTRERAGFEVRDVHPTHYGRVCPIETPEGPNIGLINSMALYARLNEYGFLETPYRKIIDGKVSDQIDYLSAIEESHYVIAQANAALDDEGRFVDDLVACREAGETMLTAPGNVHYMDVAPSQIVSVAASLIPFLEHDDANRALMGANMQRQAVPCLRPEKPLVGTGVERTVAVDSGTTVQALRGGVVDHVDADRVVIRVNDEENVAGEVGVDIYNLIKYTRSNQNTNINQRPIVARGDKVAKGDVLADGASTDLGELALGQNMLIAFMPWNGYNFEDSILISERVVADDRYTSIHIEELTVVARDTKLGPEEITRDISNLAETQLNRLDDSGIVYIGAEVSADDVLVGKVTPKGETQLTPEEKLLRAIFGEKASDVKDTSLRVPSGMTGTVIDVQVFTREGIVRDKRAQSIIDDELRRYRQDLNDQLRIVENDQFDRIEKMLVGKTVNGGPRKLAKGATLTKAYLADLDRWQWFDIRLADEQHAVVLEQAKESLEQKRHQFDLAFEEKRKKLTQGDELPPGVLKMIKVYLAVKRRLQPGDKMAGRHGNKGVVSRITPVEDMPHMADGTPADIVLNPLGVPSRMNVGQVLEVHLGWAAKGVGYRIADMLRDERTAQAKSVRGYLEKVYNTTGSSAHIDSLTDEEVLELANNLKKGVPFATPVFDGATEEEIGKMLELAYPDDVAARMRLTASRSQAWLYDGRTGEQFERPVTIGYMHYLKLHHLVDDKMHARSTGPYSLVTQQPLGGKAQFGGQRFGEMEVWALEAYGASYTLQEMLTVKSDDITGRTKVYENIVKGDHVIDAGMPESFNVLVKEIRSLALDMDLERN.

This sequence belongs to the RNA polymerase beta chain family. The RNAP catalytic core consists of 2 alpha, 1 beta, 1 beta' and 1 omega subunit. When a sigma factor is associated with the core the holoenzyme is formed, which can initiate transcription.

The enzyme catalyses RNA(n) + a ribonucleoside 5'-triphosphate = RNA(n+1) + diphosphate. Functionally, DNA-dependent RNA polymerase catalyzes the transcription of DNA into RNA using the four ribonucleoside triphosphates as substrates. This is DNA-directed RNA polymerase subunit beta from Bordetella pertussis (strain Tohama I / ATCC BAA-589 / NCTC 13251).